Here is a 743-residue protein sequence, read N- to C-terminus: Phosphoribosylformylglycinamidine synthase subunit PurL (743 aa).

His-53 is a catalytic residue. ATP-binding residues include Tyr-56 and Lys-95. A Mg(2+)-binding site is contributed by Glu-97. Substrate is bound by residues 98-101 (SHNH) and Arg-120. The Proton acceptor role is filled by His-99. Asp-121 is a binding site for Mg(2+). Gln-245 serves as a coordination point for substrate. Mg(2+) is bound at residue Asp-275. A substrate-binding site is contributed by 319 to 321 (ESQ). ATP is bound by residues Asp-502 and Gly-539. Asn-540 contributes to the Mg(2+) binding site. Ser-542 contacts substrate.

This sequence belongs to the FGAMS family. In terms of assembly, monomer. Part of the FGAM synthase complex composed of 1 PurL, 1 PurQ and 2 PurS subunits.

It localises to the cytoplasm. The enzyme catalyses N(2)-formyl-N(1)-(5-phospho-beta-D-ribosyl)glycinamide + L-glutamine + ATP + H2O = 2-formamido-N(1)-(5-O-phospho-beta-D-ribosyl)acetamidine + L-glutamate + ADP + phosphate + H(+). Its pathway is purine metabolism; IMP biosynthesis via de novo pathway; 5-amino-1-(5-phospho-D-ribosyl)imidazole from N(2)-formyl-N(1)-(5-phospho-D-ribosyl)glycinamide: step 1/2. Part of the phosphoribosylformylglycinamidine synthase complex involved in the purines biosynthetic pathway. Catalyzes the ATP-dependent conversion of formylglycinamide ribonucleotide (FGAR) and glutamine to yield formylglycinamidine ribonucleotide (FGAM) and glutamate. The FGAM synthase complex is composed of three subunits. PurQ produces an ammonia molecule by converting glutamine to glutamate. PurL transfers the ammonia molecule to FGAR to form FGAM in an ATP-dependent manner. PurS interacts with PurQ and PurL and is thought to assist in the transfer of the ammonia molecule from PurQ to PurL. The chain is Phosphoribosylformylglycinamidine synthase subunit PurL from Lactobacillus helveticus (strain DPC 4571).